A 100-amino-acid polypeptide reads, in one-letter code: Small ribosomal subunit protein eS24 (100 aa).

This sequence belongs to the eukaryotic ribosomal protein eS24 family.

The sequence is that of Small ribosomal subunit protein eS24 from Methanothermobacter thermautotrophicus (strain ATCC 29096 / DSM 1053 / JCM 10044 / NBRC 100330 / Delta H) (Methanobacterium thermoautotrophicum).